Reading from the N-terminus, the 542-residue chain is uncharacterized protein (542 aa).

At 1-78 (MSVQKEEYDI…EEKKLVRKMD (78 aa)) the chain is on the extracellular side. The chain crosses the membrane as a helical span at residues 79–99 (LKIFLWVFIMFAFLDLIRKNI). Residues 100 to 119 (ARAVSDNFIVDLKMNTNDYN) are Cytoplasmic-facing. A helical transmembrane segment spans residues 120–140 (LGQTVYLVIFLASELPGNLLS). Topologically, residues 141-147 (KRFGPER) are extracellular. The helical transmembrane segment at 148–168 (VIPVQIVLWSVICITQAGLKN) threads the bilayer. Residues 169–176 (RGQFIATR) are Cytoplasmic-facing. Residues 177–197 (CLLGMVQGGFIPDNILYLSYY) traverse the membrane as a helical segment. Over 198–208 (YTGAELTFRLS) the chain is Extracellular. A helical transmembrane segment spans residues 209–229 (FFWCAIPLFQILGSLLASGII). The Cytoplasmic segment spans residues 230–241 (EMRGIHNLAGWQ). The helical transmembrane segment at 242–262 (YLFIIEGFLSLSVGVASFYLM) threads the bilayer. The Extracellular segment spans residues 263–326 (RRGPTQTGES…TLTEFDLWPL (64 aa)). The helical transmembrane segment at 327–347 (FIQGITAFISLQTVGSYLSLI) threads the bilayer. Over 348 to 359 (LKSLNYSTFLSN) the chain is Cytoplasmic. The helical transmembrane segment at 360–380 (ILAIPGQALLLINLPLAALLS) threads the bilayer. Topologically, residues 381–387 (RKLKEKS) are extracellular. The helical transmembrane segment at 388–408 (LCVGIANVWVLPFIVSLVALP) threads the bilayer. The Cytoplasmic portion of the chain corresponds to 409 to 416 (TDTNPWIK). The helical transmembrane segment at 417–437 (YILLTGILGLPYTHSILAGWV) threads the bilayer. Topologically, residues 438–482 (SEISNSVRSRTVGTALYNMSAQVGAIIASNMYRNDDKPYYTRGNK) are extracellular. Residues 483 to 503 (ILLGFTCFNICMAVATKFYYI) form a helical membrane-spanning segment. The Cytoplasmic segment spans residues 504–542 (SRNKYKDRKWNSMTKEEQINYLDTTKDKGMKRLDYRFIH).

The protein belongs to the major facilitator superfamily. Allantoate permease family.

The protein localises to the membrane. This is an uncharacterized protein from Saccharomyces cerevisiae (strain ATCC 204508 / S288c) (Baker's yeast).